Reading from the N-terminus, the 231-residue chain is 2-C-methyl-D-erythritol 4-phosphate cytidylyltransferase (231 aa).

Belongs to the IspD/TarI cytidylyltransferase family. IspD subfamily.

It carries out the reaction 2-C-methyl-D-erythritol 4-phosphate + CTP + H(+) = 4-CDP-2-C-methyl-D-erythritol + diphosphate. It functions in the pathway isoprenoid biosynthesis; isopentenyl diphosphate biosynthesis via DXP pathway; isopentenyl diphosphate from 1-deoxy-D-xylulose 5-phosphate: step 2/6. In terms of biological role, catalyzes the formation of 4-diphosphocytidyl-2-C-methyl-D-erythritol from CTP and 2-C-methyl-D-erythritol 4-phosphate (MEP). In Xylella fastidiosa (strain M23), this protein is 2-C-methyl-D-erythritol 4-phosphate cytidylyltransferase.